We begin with the raw amino-acid sequence, 117 residues long: Fluoride-specific ion channel FluC 2 (117 aa).

4 helical membrane-spanning segments follow: residues 4–24 (FLIG…GDII), 31–51 (KFPW…GIIT), 59–79 (LSMI…TFMY), and 94–114 (LIYI…GEFI). The Na(+) site is built by Gly69 and Thr72.

It belongs to the fluoride channel Fluc/FEX (TC 1.A.43) family.

It localises to the cell membrane. It carries out the reaction fluoride(in) = fluoride(out). Its activity is regulated as follows. Na(+) is not transported, but it plays an essential structural role and its presence is essential for fluoride channel function. Fluoride-specific ion channel. Important for reducing fluoride concentration in the cell, thus reducing its toxicity. The sequence is that of Fluoride-specific ion channel FluC 2 from Clostridium acetobutylicum (strain ATCC 824 / DSM 792 / JCM 1419 / IAM 19013 / LMG 5710 / NBRC 13948 / NRRL B-527 / VKM B-1787 / 2291 / W).